The following is a 56-amino-acid chain: uncharacterized protein (56 aa).

The segment at 15–56 (SIGNISSGNINNSIGNSSSSGCDDVFNNSTNNNNNNNNNNNK) is disordered.

This is an uncharacterized protein from Dictyostelium discoideum (Social amoeba).